We begin with the raw amino-acid sequence, 265 residues long: Urease accessory protein UreH (265 aa).

The protein belongs to the UreD family. UreH, UreF and UreG form a complex that acts as a GTP-hydrolysis-dependent molecular chaperone, activating the urease apoprotein by helping to assemble the nickel containing metallocenter of UreC. The UreE protein probably delivers the nickel.

The protein resides in the cytoplasm. Functionally, required for maturation of urease via the functional incorporation of the urease nickel metallocenter. This chain is Urease accessory protein UreH, found in Helicobacter pylori (strain P12).